The primary structure comprises 309 residues: Homoserine O-succinyltransferase (309 aa).

The active-site Acyl-thioester intermediate is the C142. Residues K163 and S192 each contribute to the substrate site. The active-site Proton acceptor is the H235. E237 is an active-site residue. R249 is a substrate binding site.

Belongs to the MetA family. Homodimer.

It is found in the cytoplasm. It catalyses the reaction L-homoserine + succinyl-CoA = O-succinyl-L-homoserine + CoA. It functions in the pathway amino-acid biosynthesis; L-methionine biosynthesis via de novo pathway; O-succinyl-L-homoserine from L-homoserine: step 1/1. Transfers a succinyl group from succinyl-CoA to L-homoserine, forming succinyl-L-homoserine. In Escherichia coli O157:H7, this protein is Homoserine O-succinyltransferase.